Consider the following 51-residue polypeptide: Putative ribosomal protein eL39-like 5 (51 aa).

This sequence belongs to the eukaryotic ribosomal protein eL39 family.

This Homo sapiens (Human) protein is Putative ribosomal protein eL39-like 5 (RPL39P5).